Here is a 236-residue protein sequence, read N- to C-terminus: MLYTNNYNIPKIIIALDFYNKKEAMTLVDLLDPSVFYLKIGKEMFTILGFKFVKELHKLGFNVFLDLKFHDIPNTVFNATKAAADLGIWMLSVHASGGKNMLLSAKKALKSFKKPPLLIAVTMLTSLKEKDLKEIGIKISLKDYILILSKLSNDCGLDGIVCPGNQAKKIKSLYGDKYKIITPGIRLSSDSSFDQKHIITPKEAKEFQIDYIVIGRSITTSKNPIKKLNLIIESMR.

Substrate-binding positions include Asp-17, Lys-39, 66–75 (DLKFHDIPNT), Thr-125, Arg-186, Gln-195, Gly-215, and Arg-216. Lys-68 acts as the Proton donor in catalysis.

It belongs to the OMP decarboxylase family. Type 1 subfamily. In terms of assembly, homodimer.

It catalyses the reaction orotidine 5'-phosphate + H(+) = UMP + CO2. It participates in pyrimidine metabolism; UMP biosynthesis via de novo pathway; UMP from orotate: step 2/2. Catalyzes the decarboxylation of orotidine 5'-monophosphate (OMP) to uridine 5'-monophosphate (UMP). In Buchnera aphidicola subsp. Schizaphis graminum (strain Sg), this protein is Orotidine 5'-phosphate decarboxylase.